Reading from the N-terminus, the 127-residue chain is Large ribosomal subunit protein bL12 (127 aa).

The protein belongs to the bacterial ribosomal protein bL12 family. In terms of assembly, homodimer. Part of the ribosomal stalk of the 50S ribosomal subunit. Forms a multimeric L10(L12)X complex, where L10 forms an elongated spine to which 2 to 4 L12 dimers bind in a sequential fashion. Binds GTP-bound translation factors.

Its function is as follows. Forms part of the ribosomal stalk which helps the ribosome interact with GTP-bound translation factors. Is thus essential for accurate translation. The protein is Large ribosomal subunit protein bL12 of Symbiobacterium thermophilum (strain DSM 24528 / JCM 14929 / IAM 14863 / T).